A 515-amino-acid chain; its full sequence is Spermatogenesis-associated protein 2 (515 aa).

Residues alanine 78–serine 150 enclose the PUB domain. Positions threonine 321–arginine 338 match the PIM motif motif. A disordered region spans residues glycine 429–threonine 452.

This sequence belongs to the SPATA2 family. As to quaternary structure, interacts (via the PIM motif) with RNF31/HOIP (via the PUB domain); the interaction is direct. Interacts (via the PUB domain) with CYLD; the interaction is direct. Widely expressed, with highest expression in testis, lung and intestine, and lower expression in brain, heart and spleen. Present at high level in Sertoli cells: expressed from stage I to stage XII of the testis seminiferous epithelium (at protein level).

The protein localises to the cytoplasm. Its subcellular location is the nucleus. Its function is as follows. Bridging factor that mediates the recruitment of CYLD to the LUBAC complex, thereby regulating TNF-alpha-induced necroptosis. Acts as a direct binding intermediate that bridges RNF31/HOIP, the catalytic subunit of the LUBAC complex, and the deubiquitinase (CYLD), thereby recruiting CYLD to the TNF-R1 signaling complex (TNF-RSC). Required to activate the 'Met-1'- (linear) and 'Lys-63'-linked deubiquitinase activities of CYLD. Controls the kinase activity of RIPK1 and TNF-alpha-induced necroptosis by promoting 'Met-1'-linked deubiquitination of RIPK1 by CYLD. The sequence is that of Spermatogenesis-associated protein 2 from Mus musculus (Mouse).